The following is a 443-amino-acid chain: Chromosomal replication initiator protein DnaA (443 aa).

Residues 1 to 67 (MDAWSRSLER…RELLAHFAGF (67 aa)) form a domain I, interacts with DnaA modulators region. Positions 67–105 (FSDVFLEIGSRPRPVEAQNAPFSTPSAHVSSEPQVPFAG) are domain II. The tract at residues 106–323 (NLDNHYTFAN…GALNTLTARA (218 aa)) is domain III, AAA+ region. ATP-binding residues include glycine 151, glycine 153, lysine 154, and threonine 155. The domain IV, binds dsDNA stretch occupies residues 324–443 (NFTGRAITTE…WDKLIRKLSE (120 aa)).

This sequence belongs to the DnaA family. Oligomerizes as a right-handed, spiral filament on DNA at oriC.

It localises to the cytoplasm. Functionally, plays an essential role in the initiation and regulation of chromosomal replication. ATP-DnaA binds to the origin of replication (oriC) to initiate formation of the DNA replication initiation complex once per cell cycle. Binds the DnaA box (a 9 base pair repeat at the origin) and separates the double-stranded (ds)DNA. Forms a right-handed helical filament on oriC DNA; dsDNA binds to the exterior of the filament while single-stranded (ss)DNA is stabiized in the filament's interior. The ATP-DnaA-oriC complex binds and stabilizes one strand of the AT-rich DNA unwinding element (DUE), permitting loading of DNA polymerase. After initiation quickly degrades to an ADP-DnaA complex that is not apt for DNA replication. Binds acidic phospholipids. The sequence is that of Chromosomal replication initiator protein DnaA from Stenotrophomonas maltophilia (strain R551-3).